The chain runs to 399 residues: uncharacterized protein (399 aa).

The tract at residues 375-399 (AAGGHRGSHGKSEQAATVRVVDDRR) is disordered.

It belongs to the mycobacterial PPE family.

This is an uncharacterized protein from Mycobacterium tuberculosis (strain ATCC 25618 / H37Rv).